Reading from the N-terminus, the 105-residue chain is MMNDTEFHKLVDHALMIIEEGIDESGADIESETTGNVLTLEFENRSQIVINRQEPLHELWLASKSGGYHFKYNNGEWHCTRSGEEFFALVKRECSVHAGETVDWS.

Belongs to the frataxin family.

Functionally, involved in iron-sulfur (Fe-S) cluster assembly. May act as a regulator of Fe-S biogenesis. In Photobacterium profundum (strain SS9), this protein is Iron-sulfur cluster assembly protein CyaY.